The sequence spans 490 residues: 4-hydroxyphenylacetaldehyde synthase (490 aa).

Positions 97, 198, and 313 each coordinate L-phenylalanine. Lys314 carries the post-translational modification N6-(pyridoxal phosphate)lysine. Phe343 contacts L-phenylalanine.

It belongs to the group II decarboxylase family. As to quaternary structure, homodimer. It depends on pyridoxal 5'-phosphate as a cofactor.

The catalysed reaction is L-tyrosine + O2 + H2O + H(+) = (4-hydroxyphenyl)acetaldehyde + H2O2 + NH4(+) + CO2. Its function is as follows. Catalyzes the production of 4-hydroxyphenylacetaldehyde (HPAA) directly from L-tyrosine, tyramine not being formed as an intermediate. The protein is 4-hydroxyphenylacetaldehyde synthase of Rhodiola rosea (Roseroot).